Here is a 253-residue protein sequence, read N- to C-terminus: 5'/3'-nucleotidase SurE (253 aa).

Aspartate 8, aspartate 9, serine 39, and asparagine 92 together coordinate a divalent metal cation.

Belongs to the SurE nucleotidase family. The cofactor is a divalent metal cation.

The protein localises to the cytoplasm. The enzyme catalyses a ribonucleoside 5'-phosphate + H2O = a ribonucleoside + phosphate. The catalysed reaction is a ribonucleoside 3'-phosphate + H2O = a ribonucleoside + phosphate. It carries out the reaction [phosphate](n) + H2O = [phosphate](n-1) + phosphate + H(+). Its function is as follows. Nucleotidase with a broad substrate specificity as it can dephosphorylate various ribo- and deoxyribonucleoside 5'-monophosphates and ribonucleoside 3'-monophosphates with highest affinity to 3'-AMP. Also hydrolyzes polyphosphate (exopolyphosphatase activity) with the preference for short-chain-length substrates (P20-25). Might be involved in the regulation of dNTP and NTP pools, and in the turnover of 3'-mononucleotides produced by numerous intracellular RNases (T1, T2, and F) during the degradation of various RNAs. The protein is 5'/3'-nucleotidase SurE of Salmonella paratyphi B (strain ATCC BAA-1250 / SPB7).